The primary structure comprises 1214 residues: Protein charlatan (1214 aa).

Disordered stretches follow at residues 1-20, 213-238, and 250-284; these read MATL…QSSN, HVNQ…RQEH, and SANA…GGRK. Positions 258 to 276 are enriched in low complexity; sequence AQSTPTSAPSNSSGGSTSS. 2 consecutive C2H2-type zinc fingers follow at residues 305-327 and 333-356; these read YACT…ENIH and FQCY…LRMH. 2 disordered regions span residues 367–397 and 463–488; these read RRHV…NVTI and PVAS…SGLL. The span at 473–485 shows a compositional bias: gly residues; sequence GSHGGNGNGGSGS. 2 consecutive C2H2-type zinc fingers follow at residues 496–518 and 522–545; these read FTCC…LNTH and FVCL…LKVH. Disordered regions lie at residues 741-790, 848-946, and 1062-1084; these read SASS…ATSP, NDED…SGPS, and LSTP…SNAS. Composition is skewed to low complexity over residues 855–871, 885–896, 923–946, and 1071–1084; these read QQHQ…QQQQ, NNNNNNNSNNNN, SPGT…SGPS, and KAAP…SNAS.

As to expression, expressed in the PNS and CNS. In early blastoderm stages, it is ubiquitously expressed, then, before stage 5, it disappears from the poles of the embryo and faint stripes are visible. At stage 5, it also accumulates in the dorsal region, cephalic furrow ectodermal patches between the tracheal pits, where neurons of the PNS appear. In older embryos (stage 15) a strong expression is mostly restricted to the central nervous system (CNS) and PNS. In PNS, the pattern suggests that expression occur in many of the neurons of the ventral, lateral and dorsal clusters of neurons. In third instar wing disks, it is expressed in rows of cells on either side of the prospective anterior wing margin and in groups of cells that coincide with proneural clusters of ac/sc expression. Also expressed independently of ac/sc in certain areas of the disk, such as the postnotum and posterior dorsal proximal wing. Expressed in the proneural clusters of the leg disks and in the eye/antenna disk.

It is found in the nucleus. Functionally, probable transcription factor involved in the development of the adult pattern of macrochaetae. Required for accumulation of achaete (ac) and scute (sc) in proneural clusters. Probably acts by binding to the proneural cluster-specific enhancers of the ac/sc complex and increasing enhancer efficiency, thereby acting as a stimulator of ac/sc expression in proneural clusters. Also required for correct development of the embryonic/larval peripheral nervous system (PNS). In Drosophila melanogaster (Fruit fly), this protein is Protein charlatan (chn).